The sequence spans 57 residues: DNA gyrase inhibitor YacG (57 aa).

Zn(2+) is bound by residues Cys5, Cys8, Cys20, and Cys24.

The protein belongs to the DNA gyrase inhibitor YacG family. As to quaternary structure, interacts with GyrB. Requires Zn(2+) as cofactor.

Functionally, inhibits all the catalytic activities of DNA gyrase by preventing its interaction with DNA. Acts by binding directly to the C-terminal domain of GyrB, which probably disrupts DNA binding by the gyrase. In Caulobacter vibrioides (strain ATCC 19089 / CIP 103742 / CB 15) (Caulobacter crescentus), this protein is DNA gyrase inhibitor YacG.